The sequence spans 721 residues: Probable acyl-activating enzyme 17, peroxisomal (721 aa).

The Microbody targeting signal motif lies at 719-721; that stretch reads SKL.

This sequence belongs to the ATP-dependent AMP-binding enzyme family. In terms of tissue distribution, expressed in leaves, stems and developing seeds.

It is found in the peroxisome. Functionally, may act as an acid--thiol ligase that activates carboxylic acids by forming acyl-CoAs. The protein is Probable acyl-activating enzyme 17, peroxisomal (AAE17) of Arabidopsis thaliana (Mouse-ear cress).